A 363-amino-acid polypeptide reads, in one-letter code: NAD(P)H-quinone oxidoreductase subunit 1, chloroplastic (363 aa).

A run of 9 helical transmembrane segments spans residues 30 to 50, 98 to 118, 129 to 149, 165 to 185, 203 to 223, 248 to 268, 269 to 289, 300 to 320, and 334 to 354; these read LVPI…IVWL, FSIG…VIPF, IGVF…LMSG, AAQS…ISLL, LWGW…ISSL, YSGI…LVSS, LFVT…IFVP, VFGT…FLFI, and DQLL…NLLL.

Belongs to the complex I subunit 1 family. NDH is composed of at least 16 different subunits, 5 of which are encoded in the nucleus.

Its subcellular location is the plastid. The protein localises to the chloroplast thylakoid membrane. It carries out the reaction a plastoquinone + NADH + (n+1) H(+)(in) = a plastoquinol + NAD(+) + n H(+)(out). The catalysed reaction is a plastoquinone + NADPH + (n+1) H(+)(in) = a plastoquinol + NADP(+) + n H(+)(out). Its function is as follows. NDH shuttles electrons from NAD(P)H:plastoquinone, via FMN and iron-sulfur (Fe-S) centers, to quinones in the photosynthetic chain and possibly in a chloroplast respiratory chain. The immediate electron acceptor for the enzyme in this species is believed to be plastoquinone. Couples the redox reaction to proton translocation, and thus conserves the redox energy in a proton gradient. The polypeptide is NAD(P)H-quinone oxidoreductase subunit 1, chloroplastic (Oenothera elata subsp. hookeri (Hooker's evening primrose)).